We begin with the raw amino-acid sequence, 32 residues long: MILGAVFYIVFIALFFGIAVGIIFAIKSIKLI.

A helical transmembrane segment spans residues 6–26 (VFYIVFIALFFGIAVGIIFAI).

The protein belongs to the PetL family. The 4 large subunits of the cytochrome b6-f complex are cytochrome b6, subunit IV (17 kDa polypeptide, PetD), cytochrome f and the Rieske protein, while the 4 small subunits are PetG, PetL, PetM and PetN. The complex functions as a dimer.

It is found in the cellular thylakoid membrane. Its function is as follows. Component of the cytochrome b6-f complex, which mediates electron transfer between photosystem II (PSII) and photosystem I (PSI), cyclic electron flow around PSI, and state transitions. PetL is important for photoautotrophic growth as well as for electron transfer efficiency and stability of the cytochrome b6-f complex. The sequence is that of Cytochrome b6-f complex subunit 6 from Mastigocladus laminosus (Fischerella sp.).